A 375-amino-acid polypeptide reads, in one-letter code: Serine protease 23 (375 aa).

The N-terminal stretch at 1–23 (MAGTPGHPIFLLLLLRAIGQVSP) is a signal peptide. N-linked (GlcNAc...) asparagine glycosylation is present at Asn-93. An intrachain disulfide couples Cys-153 to Cys-169. His-168 serves as the catalytic Charge relay system. Asn-199 carries an N-linked (GlcNAc...) asparagine glycan. Residues Asp-232 and Ser-308 each act as charge relay system in the active site.

This sequence belongs to the peptidase S1 family.

Its subcellular location is the secreted. This is Serine protease 23 (PRSS23) from Bos taurus (Bovine).